Reading from the N-terminus, the 540-residue chain is Keratin, type II cytoskeletal 73 (540 aa).

A head region spans residues 1-131 (MSRQFTYKSG…DPEIQKVCAQ (131 aa)). Residues 132 to 167 (EREQIKALNNKFASFIDKVRFLEQQNQVLGTKWELL) are coil 1A. One can recognise an IF rod domain in the interval 132-445 (EREQIKALNN…KLLEGEECRM (314 aa)). The interval 168-186 (QQQDLDNCKNNLEPILEGY) is linker 1. The coil 1B stretch occupies residues 187-278 (ISNLRKQLEM…CLYEGEIAQM (92 aa)). The tract at residues 279–302 (QSHISDTSVILSMDNNRNLDLNSI) is linker 12. A coil 2 region spans residues 303–441 (IAEVRAQYED…ATYRKLLEGE (139 aa)). The tail stretch occupies residues 442-540 (ECRMSGEYTN…LSSPTKKTPR (99 aa)). The segment at 509 to 540 (GEAKTRLGSTSEIKDLLGKTPALSSPTKKTPR) is disordered. The segment covering 530-540 (ALSSPTKKTPR) has biased composition (polar residues).

The protein belongs to the intermediate filament family. In terms of assembly, heterotetramer of two type I and two type II keratins.

Functionally, has a role in hair formation. Specific component of keratin intermediate filaments in the inner root sheath (IRS) of the hair follicle. This chain is Keratin, type II cytoskeletal 73 (KRT73), found in Bos taurus (Bovine).